The primary structure comprises 187 residues: Ribosome maturation factor RimM (187 aa).

The region spanning 94–168 (DDEFYHADLV…RVIVDMPDGL (75 aa)) is the PRC barrel domain. The disordered stretch occupies residues 167-187 (GLIGGDKPDTSDTAPLGQDFD).

It belongs to the RimM family. Binds ribosomal protein uS19.

The protein localises to the cytoplasm. An accessory protein needed during the final step in the assembly of 30S ribosomal subunit, possibly for assembly of the head region. Essential for efficient processing of 16S rRNA. May be needed both before and after RbfA during the maturation of 16S rRNA. It has affinity for free ribosomal 30S subunits but not for 70S ribosomes. The protein is Ribosome maturation factor RimM of Jannaschia sp. (strain CCS1).